The chain runs to 284 residues: Dihydropteroate synthase (284 aa).

The Pterin-binding domain occupies 6–265 (VQVIGVLNVT…DVRASVDALK (260 aa)). Residue asparagine 13 participates in Mg(2+) binding. (7,8-dihydropterin-6-yl)methyl diphosphate contacts are provided by residues threonine 53, aspartate 86, asparagine 105, aspartate 177, lysine 213, and 253–255 (RVH).

Belongs to the DHPS family. In terms of assembly, homodimer. It depends on Mg(2+) as a cofactor.

The catalysed reaction is (7,8-dihydropterin-6-yl)methyl diphosphate + 4-aminobenzoate = 7,8-dihydropteroate + diphosphate. The protein operates within cofactor biosynthesis; tetrahydrofolate biosynthesis; 7,8-dihydrofolate from 2-amino-4-hydroxy-6-hydroxymethyl-7,8-dihydropteridine diphosphate and 4-aminobenzoate: step 1/2. Its activity is regulated as follows. Is potently inhibited by the sulfone dapsone and the two sulfonamides sulfamethoxazole and sulfamethoxypyridazine, with Kis in the range of 12 to 32 nM. To a lesser extent, is also inhibited by p-aminosalicylate (PAS). Catalyzes the condensation of para-aminobenzoate (pABA) with 6-hydroxymethyl-7,8-dihydropterin diphosphate (DHPt-PP) to form 7,8-dihydropteroate, the immediate precursor of folate derivatives. The sequence is that of Dihydropteroate synthase (folP1) from Mycobacterium leprae (strain TN).